We begin with the raw amino-acid sequence, 2737 residues long: Non-reducing polyketide synthase ATEG_07661 (2737 aa).

The tract at residues 75–245 is N-terminal acylcarrier protein transacylase domain (SAT); the sequence is SRSLAELDSW…VRYDQTRATV (171 aa). Cys-154 acts as the Nucleophile; for transacylase activity in catalysis. Catalysis depends on His-276, which acts as the Proton donor/acceptor; for transacylase activity. The Ketosynthase family 3 (KS3) domain maps to 427-854; that stretch reads NEAIAIVGMS…GSNASMIITE (428 aa). Active-site for beta-ketoacyl synthase activity residues include Cys-603, His-738, and His-777. Residues 969–1260 form a malonyl-CoA:ACP transacylase (MAT) region; sequence FGGQVSRFVG…IMASRAIAQS (292 aa). The N-terminal hotdog fold stretch occupies residues 1368 to 1503; it reads LQSLWNFVEF…ASVEMRAPTD (136 aa). One can recognise a PKS/mFAS DH domain in the interval 1368–1683; the sequence is LQSLWNFVEF…YGRVAKASMS (316 aa). Residues 1399–1681 form a product template (PT) domain region; that stretch reads FVLSHVIAQT…VQYGRVAKAS (283 aa). His-1403 acts as the Proton acceptor; for dehydratase activity in catalysis. A C-terminal hotdog fold region spans residues 1535 to 1683; the sequence is VEVLQGRNVY…YGRVAKASMS (149 aa). Asp-1592 functions as the Proton donor; for dehydratase activity in the catalytic mechanism. The disordered stretch occupies residues 1724–1747; sequence SRTTKKKAKASKSKSSVKKDKAPS. Positions 1725 to 1739 are enriched in basic residues; it reads RTTKKKAKASKSKSS. The Carrier domain maps to 1750 to 1824; the sequence is RDITDEVRNL…KFVACVSNAL (75 aa). An O-(pantetheine 4'-phosphoryl)serine modification is found at Ser-1784. The segment at 1827-1876 is disordered; it reads PNQGQSSIDEDDEDDEHSEDSSNESSSAASDEDASSGLESPDTGILTPED. Over residues 1834–1848 the composition is skewed to acidic residues; it reads IDEDDEDDEHSEDSS. Low complexity predominate over residues 1849–1866; it reads NESSSAASDEDASSGLES. Positions 2094-2270 are methyltransferase domain; sequence ADRIQSSSGS…GFGHVDWTDG (177 aa). An NADPH-binding domain region spans residues 2362-2665; sequence VVLVTGATGS…IPFKDWISRV (304 aa).

Its pathway is secondary metabolite biosynthesis. Non-reducing polyketide synthase; part of the cluster B that mediates the biosynthesis of azasperpyranones, members of the azaphilone family that exhibit anti-cancer activities. Azasperpyranones are synthesized by 2 clusters, A and B. Cluster A is responsible for the production of the polyhydric phenol moiety while the azaphilonoid scaffold is produced by the cluster B. The non-reducing polyketide synthase ATEG_03629 produces 5-methyl orsellinic acid, which is then reduced to 5-methyl orsellinic aldehyde by the NRPS-like protein ATEG_03630. 5-methyl orsellinic aldehyde is then first hydroxylated by the FAD-dependent monooxygenase ATEG_03635 and subsequently hydroxylated by the cytochrome P450 monooxygenase ATEG_03631 to produce the unstable polyhydric phenol precursor of azasperpyranones. On the other hand, the polyketide synthase ATEG_07659 is responsible for producing the 3,5-dimethyloctadienone moiety from acetyl-CoA, three malonyl-CoA, and two S-adenosyl methionines (SAM). The 3,5-dimethyloctadienone moiety is then loaded onto the SAT domain of ATEG_07661 and extended with four malonyl-CoA and one SAM, which leads to the formation of 2,4-dihydroxy-6-(5,7-dimethyl-2-oxo-trans-3-trans-5-nonadienyl)-3-methylbenzaldehyde (compound 8) after reductive release and aldol condensation. The FAD-dependent monooxygenase ATEG_07662 is the next enzyme in the biosynthesis sequence and hydroxylates the side chain at the benzylic position of compound 8. In Aspergillus nidulans, afoF, the ortholog of the FAD-dependent oxygenase ATEG_07660, is the key enzyme for the biosynthesis of asperfuranone by catalyzing the hydroxylation at C-8 of to prevent the formation of a six-membered ring hemiacetal intermediate and thus facilitating the formation of a five-membered ring to produce asperfuranone. In Aspergillus terreus, ATEG_07660 is probably not functional, which leads to the formation of the six-membered ring hemiacetal intermediate presperpyranone instead of asperfuranone. Finally, ATEG_03636 is involved in the condensation of the polyhydric phenol moiety produced by cluster A and the perasperpyranone precursor produced by cluster B, to yield azasperpyranone A. Further modifications of azasperpyranone A result in the production of derivatives, including azasperpyranone B to F. The protein is Non-reducing polyketide synthase ATEG_07661 of Aspergillus terreus (strain NIH 2624 / FGSC A1156).